The following is a 185-amino-acid chain: ATP synthase subunit delta (185 aa).

Belongs to the ATPase delta chain family. In terms of assembly, F-type ATPases have 2 components, F(1) - the catalytic core - and F(0) - the membrane proton channel. F(1) has five subunits: alpha(3), beta(3), gamma(1), delta(1), epsilon(1). F(0) has three main subunits: a(1), b(2) and c(10-14). The alpha and beta chains form an alternating ring which encloses part of the gamma chain. F(1) is attached to F(0) by a central stalk formed by the gamma and epsilon chains, while a peripheral stalk is formed by the delta and b chains.

The protein resides in the cell inner membrane. In terms of biological role, f(1)F(0) ATP synthase produces ATP from ADP in the presence of a proton or sodium gradient. F-type ATPases consist of two structural domains, F(1) containing the extramembraneous catalytic core and F(0) containing the membrane proton channel, linked together by a central stalk and a peripheral stalk. During catalysis, ATP synthesis in the catalytic domain of F(1) is coupled via a rotary mechanism of the central stalk subunits to proton translocation. Its function is as follows. This protein is part of the stalk that links CF(0) to CF(1). It either transmits conformational changes from CF(0) to CF(1) or is implicated in proton conduction. The sequence is that of ATP synthase subunit delta from Pelagibacter ubique (strain HTCC1062).